Consider the following 501-residue polypeptide: MPSLLLSLLLLQVPIICAWLLVRFIIDLTGKNGTIPTIRRWPALFPEFLDRLSYNDNAAQLVEEGYRKYKDRPFRLLKMDMDLVVIPLKYATELRAITSDKLDPLTASFDDNAGELTGILLGSELHSDAIHRRLTPGLRIPSTKYCRILTVCAFPERVGYLTDVIGNWTPVIPYELVLRLSTRAAARVFVGETICRDEVFLETCSSFSRNTFDTIATFRNLGKTIGFMLGILTPSVRKAREQGAYVQKLLGSEVERRRACPDEKHDDFLQWCIDLARTEQEAKPEALATRTIGILSMAVVHTTAMATTHMLFDLLADSKLRETLKKEQEDVLPSGWDGIDQNSMLKMRLLDSLMRESQRINPVGEFTFRRVVRKPITLSDGYQLRRGQQIAISARRINMDGATLEDAQTFCPSRWAQETQGASFSHSSSSNLHFGLGRYACPGRFFASYMIKAITSRILLEYDFKLESGREGYRPPNSIQGDKILPNRDAVVLFRRREVSI.

Residues Pro2–Val22 form a helical membrane-spanning segment. Cys441 lines the heme pocket.

The protein belongs to the cytochrome P450 family. Heme is required as a cofactor.

Its subcellular location is the membrane. The protein operates within secondary metabolite biosynthesis. Cytochrome P450 monooxygeanse; part of the gene cluster that mediates the biosynthesis of terpendoles, indole-diterpene (IDT) mycotoxins including terpendole I, terpendole K, terpendole C, as well as the kinesin Eg5 inhibitor terpendole E. TerP has dual activity and is able to convert terpendole E to 13-desoxyterpendole I and paspaline to 13-desoxypaxilline. Terpendoles biosynthesis begins with the synthesis of geranylgeranyl diphosphate (GGPP) by a yet unidentified GGPP synthase. Condensation of indole-3-glycerol phosphate with GGPP by the prenyltransferase terC then forms 3-geranylgeranylindole (3-GGI), followed by epoxidation and cyclization of this intermediate (by the FAD-dependent monooxygeanse terM and the terpene cyclase terB) to form paspaline. The cytochrome monooxygenase terQ then hydroxylates paspalline at C-11 to yield terpendole E. The cytochrome monooxygenase terP converts terpendole E to 13-desoxyterpendole I, and terQ converts 13-desoxyterpendole I into terpendole I. TerF and terK are required for conversion of terpendole I to terpendole C which is further converted to terpendole K. This chain is Cytochrome P450 monooxygeanse terP, found in Tolypocladium album (Soil fungus).